The primary structure comprises 559 residues: Membrane protein insertase YidC (559 aa).

The helical transmembrane segment at 7 to 24 (ILWVIFSMSLVLLYDNWQ) threads the bilayer. Low complexity-rich tracts occupy residues 45–55 (APAASGAAAQG) and 63–82 (QPATGTSAAPAAGAAPQAAA). The interval 45-82 (APAASGAAAQGDVPKANVQPATGTSAAPAAGAAPQAAA) is disordered. A run of 5 helical transmembrane segments spans residues 338-358 (LELVKDYGWLTILAKPLFWLL), 364-384 (FLGNWGWSIIALTVLIKLVFF), 434-454 (LGGCLPIVIQIPVFIALYWVL), 472-492 (LSVPDPFYILPIVMAVSMFVQ), and 507-527 (VMMIMPLVFSVMFFFFPAGLV).

It belongs to the OXA1/ALB3/YidC family. Type 1 subfamily. In terms of assembly, interacts with the Sec translocase complex via SecD. Specifically interacts with transmembrane segments of nascent integral membrane proteins during membrane integration.

It is found in the cell inner membrane. Its function is as follows. Required for the insertion and/or proper folding and/or complex formation of integral membrane proteins into the membrane. Involved in integration of membrane proteins that insert both dependently and independently of the Sec translocase complex, as well as at least some lipoproteins. Aids folding of multispanning membrane proteins. This chain is Membrane protein insertase YidC, found in Cupriavidus taiwanensis (strain DSM 17343 / BCRC 17206 / CCUG 44338 / CIP 107171 / LMG 19424 / R1) (Ralstonia taiwanensis (strain LMG 19424)).